The primary structure comprises 280 residues: Pupal cuticle protein 36a (280 aa).

The signal sequence occupies residues 1 to 15 (MKLFVLAAVLGVCLA). The 64-residue stretch at 135–198 (AEGFAYDFET…SQGAHLPTPP (64 aa)) folds into the Chitin-binding type R&amp;R domain. The disordered stretch occupies residues 258–280 (GAGRAGGTATSASEAPTTTIRLM).

This is Pupal cuticle protein 36a (PCP36a) from Manduca sexta (Tobacco hawkmoth).